The primary structure comprises 160 residues: Protein-export protein SecB (160 aa).

It belongs to the SecB family. Homotetramer, a dimer of dimers. One homotetramer interacts with 1 SecA dimer.

The protein localises to the cytoplasm. In terms of biological role, one of the proteins required for the normal export of preproteins out of the cell cytoplasm. It is a molecular chaperone that binds to a subset of precursor proteins, maintaining them in a translocation-competent state. It also specifically binds to its receptor SecA. The protein is Protein-export protein SecB of Azorhizobium caulinodans (strain ATCC 43989 / DSM 5975 / JCM 20966 / LMG 6465 / NBRC 14845 / NCIMB 13405 / ORS 571).